A 389-amino-acid chain; its full sequence is tRNA-specific 2-thiouridylase MnmA (389 aa).

ATP is bound by residues 35 to 42 (GMSGGVDS) and M61. The interaction with target base in tRNA stretch occupies residues 121 to 123 (NPD). The active-site Nucleophile is the C126. Residues C126 and C223 are joined by a disulfide bond. G151 is a binding site for ATP. Positions 173-175 (KDQ) are interaction with tRNA. Residue C223 is the Cysteine persulfide intermediate of the active site. The tract at residues 335 to 336 (RY) is interaction with tRNA.

It belongs to the MnmA/TRMU family.

It is found in the cytoplasm. The enzyme catalyses S-sulfanyl-L-cysteinyl-[protein] + uridine(34) in tRNA + AH2 + ATP = 2-thiouridine(34) in tRNA + L-cysteinyl-[protein] + A + AMP + diphosphate + H(+). Its function is as follows. Catalyzes the 2-thiolation of uridine at the wobble position (U34) of tRNA, leading to the formation of s(2)U34. This is tRNA-specific 2-thiouridylase MnmA from Actinobacillus succinogenes (strain ATCC 55618 / DSM 22257 / CCUG 43843 / 130Z).